The following is a 440-amino-acid chain: Sialyltransferase-like protein 2 (440 aa).

At 1-5 (MKLLH) the chain is on the cytoplasmic side. A helical; Signal-anchor for type II membrane protein membrane pass occupies residues 6-26 (LIFLLALTTGISAVLIYIIGV). The Lumenal segment spans residues 27 to 440 (SNLYESNRFT…HGQLCITPAD (414 aa)). 2 N-linked (GlcNAc...) asparagine glycosylation sites follow: Asn-113 and Asn-149.

The protein belongs to the glycosyltransferase 29 family.

The protein resides in the golgi apparatus membrane. Its function is as follows. May be involved in the transfer of 2-keto-3-deoxy-D-lyxo-heptulosaric acid (Dha) and/or 2-keto-3-deoxy-D-manno-octulosonic acid (Kdo) on the homogalacturonan backbone of rhamnogalacturonan-II. Required for efficient pollen grain germination and pollen tube elongation. Does not possess sialyltransferase activity in vitro. This is Sialyltransferase-like protein 2 from Arabidopsis thaliana (Mouse-ear cress).